The primary structure comprises 524 residues: Leucine-rich repeat-containing protein 1 (524 aa).

17 LRR repeats span residues 11-34 (NRHV…IYRY), 35-58 (ARSL…FFQL), 60-81 (KLRK…IANF), 83-105 (QLVE…AFCK), 107-126 (LQVA…SFPE), 127-149 (LQNL…NIGN), 150-172 (LYNL…SLTQ), 173-196 (LRRL…IGAL), 198-218 (HLKD…EIGN), 219-242 (LKNL…ISGL), 244-264 (SLTY…GIGK), 265-288 (LKKL…IGDC), 290-310 (NLTE…SIGK), 311-334 (LKKL…IGGC), 336-356 (SLTM…EVSQ), 357-380 (AVEL…LTTL), and 382-405 (LKAL…IDRA). Residues 456–512 (SAIRFLEDEKDEDENETRTLQRRATPHPGELKNMKKTVENLRNDMNAAKGLDSNKNE) adopt a coiled-coil conformation. A disordered region spans residues 464–485 (EKDEDENETRTLQRRATPHPGE). At T480 the chain carries Phosphothreonine.

As to quaternary structure, interacts with DLG1. May form a complex with DLG1 and ERBIN, where interaction between LRRC1 and ERBIN is indirect.

The protein resides in the cytoplasm. It localises to the membrane. In Mus musculus (Mouse), this protein is Leucine-rich repeat-containing protein 1 (Lrrc1).